Consider the following 710-residue polypeptide: Methionine--tRNA ligase (710 aa).

The short motif at 16–26 (PYANGAFHIGH) is the 'HIGH' region element. Cysteine 147, cysteine 150, cysteine 160, and cysteine 163 together coordinate Zn(2+). The short motif at 350–354 (KMSKS) is the 'KMSKS' region element. Residue lysine 353 coordinates ATP. A tRNA-binding domain is found at 604-710 (DFAKIDLRIA…PGAEPGMRVG (107 aa)).

The protein belongs to the class-I aminoacyl-tRNA synthetase family. MetG type 1 subfamily. Homodimer. Zn(2+) is required as a cofactor.

Its subcellular location is the cytoplasm. It carries out the reaction tRNA(Met) + L-methionine + ATP = L-methionyl-tRNA(Met) + AMP + diphosphate. In terms of biological role, is required not only for elongation of protein synthesis but also for the initiation of all mRNA translation through initiator tRNA(fMet) aminoacylation. This is Methionine--tRNA ligase from Herminiimonas arsenicoxydans.